We begin with the raw amino-acid sequence, 197 residues long: LexA repressor (197 aa).

Residues 28–47 (VREIARRFRITPRGALLHLI) constitute a DNA-binding region (H-T-H motif). Active-site for autocatalytic cleavage activity residues include serine 119 and lysine 156.

Belongs to the peptidase S24 family. In terms of assembly, homodimer.

It catalyses the reaction Hydrolysis of Ala-|-Gly bond in repressor LexA.. Its function is as follows. Represses a number of genes involved in the response to DNA damage (SOS response), including recA and lexA. In the presence of single-stranded DNA, RecA interacts with LexA causing an autocatalytic cleavage which disrupts the DNA-binding part of LexA, leading to derepression of the SOS regulon and eventually DNA repair. This is LexA repressor from Thermotoga petrophila (strain ATCC BAA-488 / DSM 13995 / JCM 10881 / RKU-1).